The chain runs to 493 residues: Extracellular tyrosine-protein kinase PKDCC (493 aa).

The N-terminal stretch at 1-32 is a signal peptide; that stretch reads MRRRRAAVAAGFCASFLLGSVLNVLFAPGSEP. Residues 28-128 form a disordered region; that stretch reads PGSEPPRPGQ…PGPGSPGPGP (101 aa). Residues 30–46 show a composition bias toward pro residues; the sequence is SEPPRPGQSPEPSPAPG. The segment covering 52 to 69 has biased composition (basic and acidic residues); that stretch reads GRGELARQIRARYEEVQR. Pro residues-rich tracts occupy residues 95 to 105 and 114 to 127; these read PGLPRPRPPWA and GWPPAPGPGSPGPG. Residue Asn-137 is glycosylated (N-linked (GlcNAc...) asparagine). Residues 138-493 enclose the Protein kinase domain; sequence VSGAQYMGSG…NKTTYVKASG (356 aa). ATP is bound by residues 144 to 152 and Lys-166; that span reads MGSGYTKAV. A Phosphotyrosine modification is found at Tyr-148. Position 177 is a phosphoserine (Ser-177). The active-site Proton acceptor is the Asp-278. N-linked (GlcNAc...) asparagine glycans are attached at residues Asn-320, Asn-369, Asn-400, Asn-460, and Asn-484.

This sequence belongs to the protein kinase superfamily. Post-translationally, N-glycosylated. Phosphorylated on tyrosines; probably via autophosphorylation. In terms of tissue distribution, highly expressed in platelets.

It localises to the secreted. The protein localises to the golgi apparatus. It carries out the reaction L-tyrosyl-[protein] + ATP = O-phospho-L-tyrosyl-[protein] + ADP + H(+). In terms of biological role, secreted tyrosine-protein kinase that mediates phosphorylation of extracellular proteins and endogenous proteins in the secretory pathway, which is essential for patterning at organogenesis stages. Mediates phosphorylation of MMP1, MMP13, MMP14, MMP19 and ERP29. Probably plays a role in platelets: rapidly and quantitatively secreted from platelets in response to stimulation of platelet degranulation. May also have serine/threonine protein kinase activity. Required for longitudinal bone growth through regulation of chondrocyte differentiation. May be indirectly involved in protein transport from the Golgi apparatus to the plasma membrane. This chain is Extracellular tyrosine-protein kinase PKDCC, found in Homo sapiens (Human).